The chain runs to 1272 residues: AF4/FMR2 family member 2 (1272 aa).

Disordered regions lie at residues 151 to 190 (SNRK…DPPQ), 204 to 231 (PQIG…DTFK), 372 to 401 (TLQK…EDDL), 422 to 497 (KAKP…QLDK), 557 to 694 (IREK…ETLQ), 715 to 743 (TLST…PAMQ), and 772 to 899 (PGQN…QDKN). Residues 155 to 164 (SKSEWPRDSH) are compositionally biased toward basic and acidic residues. Low complexity predominate over residues 165–179 (NTSPAQASQTSSQPN). Over residues 180–189 (KMQTSTQDPP) the composition is skewed to polar residues. Residues 210–227 (EKSNPSSKEENNPNSGGE) are compositionally biased toward low complexity. The segment covering 374-384 (QKWSDPSSRAS) has biased composition (polar residues). The segment covering 387-396 (MLEDDLKLSS) has biased composition (basic and acidic residues). Serine 395 bears the Phosphoserine mark. Residues 436–450 (TPQSTPATQTNVGSG) show a composition bias toward polar residues. Threonine 482 is modified (phosphothreonine). Polar residues predominate over residues 580–590 (STSVDTVSQRT). A compositionally biased stretch (basic and acidic residues) spans 620-633 (PKEKGSVELPDPPR). Residues 634 to 644 (SRNKATAHKPV) show a composition bias toward basic residues. A compositionally biased stretch (low complexity) spans 715 to 734 (TLSTLTNGNSNNLSTSNEET). Over residues 815 to 831 (PAETAEKIPEKKQRLED) the composition is skewed to basic and acidic residues. Over residues 841–850 (CISPAPPHKP) the composition is skewed to pro residues. The span at 887–899 (VSGNNGHFGQDKN) shows a compositional bias: polar residues.

The protein belongs to the AF4 family. Highly expressed in the hippocampus, the piriform cortex, Purkinje cells and the cingulate gyrus.

It localises to the nucleus speckle. Its function is as follows. RNA-binding protein. Might be involved in alternative splicing regulation through an interaction with G-quartet RNA structure. The sequence is that of AF4/FMR2 family member 2 from Mus musculus (Mouse).